The primary structure comprises 572 residues: Hemagglutinin-neuraminidase (572 aa).

Residues 1–31 (MEYWKHTNHGKDAGNELETSMATHGNKLTNK) lie on the Intravirion side of the membrane. Residues 32–52 (IIYILWTIILVLLSIVFIIVL) form a helical membrane-spanning segment. The Virion surface portion of the chain corresponds to 53–572 (INSIKSEKAH…FKTEIPKSCS (520 aa)). 2 disulfides stabilise this stretch: Cys-190/Cys-214 and Cys-256/Cys-269. Positions 252–257 (NRKSCS) are involved in neuraminidase activity. Residues Asn-308 and Asn-351 are each glycosylated (N-linked (GlcNAc...) asparagine; by host). 2 disulfide bridges follow: Cys-355-Cys-469 and Cys-463-Cys-473. Asn-523 carries an N-linked (GlcNAc...) asparagine; by host glycan. Cys-535 and Cys-544 are oxidised to a cystine.

Belongs to the paramyxoviruses hemagglutinin-neuraminidase family. Homotetramer; composed of disulfide-linked homodimers. Interacts with F protein trimer.

Its subcellular location is the virion membrane. The protein localises to the host cell membrane. The enzyme catalyses Hydrolysis of alpha-(2-&gt;3)-, alpha-(2-&gt;6)-, alpha-(2-&gt;8)- glycosidic linkages of terminal sialic acid residues in oligosaccharides, glycoproteins, glycolipids, colominic acid and synthetic substrates.. Functionally, attaches the virus to sialic acid-containing cell receptors and thereby initiating infection. Binding of HN protein to the receptor induces a conformational change that allows the F protein to trigger virion/cell membranes fusion. Neuraminidase activity ensures the efficient spread of the virus by dissociating the mature virions from the neuraminic acid containing glycoproteins. This chain is Hemagglutinin-neuraminidase (HN), found in Homo sapiens (Human).